A 608-amino-acid polypeptide reads, in one-letter code: ATP-binding protein Uup (608 aa).

2 ABC transporter domains span residues 7–217 (APVL…AADA) and 285–512 (VEAK…FAPV). Residues 42 to 49 (GRNGAGKS) and 317 to 324 (GPNGAGKT) contribute to the ATP site. The C-terminal domain (CTD), binds DNA stretch occupies residues 522-608 (AAPAAPKKSA…LEEKKENLAG (87 aa)).

It belongs to the ABC transporter superfamily. ABCF family. Uup subfamily.

It localises to the cytoplasm. The enzyme catalyses ATP + H2O = ADP + phosphate + H(+). In terms of biological role, probably plays a role in ribosome assembly or function. May be involved in resolution of branched DNA intermediates that result from template switching in postreplication gaps. Binds DNA and has ATPase activity. Its function is as follows. One of a cluster of genes involved in attachment of the holdfast to the cell. The holdfast is a structure that allows the bacteria to firmly adhere to surfaces. The polypeptide is ATP-binding protein Uup (Caulobacter vibrioides (strain ATCC 19089 / CIP 103742 / CB 15) (Caulobacter crescentus)).